Consider the following 337-residue polypeptide: Biotin synthase (337 aa).

In terms of domain architecture, Radical SAM core spans Gln-39 to Arg-267. Residues Cys-54, Cys-58, and Cys-61 each coordinate [4Fe-4S] cluster. [2Fe-2S] cluster contacts are provided by Cys-98, Cys-130, Cys-190, and Arg-262.

It belongs to the radical SAM superfamily. Biotin synthase family. In terms of assembly, homodimer. [4Fe-4S] cluster serves as cofactor. [2Fe-2S] cluster is required as a cofactor.

It carries out the reaction (4R,5S)-dethiobiotin + (sulfur carrier)-SH + 2 reduced [2Fe-2S]-[ferredoxin] + 2 S-adenosyl-L-methionine = (sulfur carrier)-H + biotin + 2 5'-deoxyadenosine + 2 L-methionine + 2 oxidized [2Fe-2S]-[ferredoxin]. It functions in the pathway cofactor biosynthesis; biotin biosynthesis; biotin from 7,8-diaminononanoate: step 2/2. Its function is as follows. Catalyzes the conversion of dethiobiotin (DTB) to biotin by the insertion of a sulfur atom into dethiobiotin via a radical-based mechanism. This Cytophaga hutchinsonii (strain ATCC 33406 / DSM 1761 / CIP 103989 / NBRC 15051 / NCIMB 9469 / D465) protein is Biotin synthase.